The primary structure comprises 931 residues: Bifunctional uridylyltransferase/uridylyl-removing enzyme (931 aa).

The segment at 1-383 (MDSVTPNSRP…KTGNSWRRVP (383 aa)) is uridylyltransferase. The interval 384-739 (ESDDFIVDNN…VGFDPARGVT (356 aa)) is uridylyl-removing. In terms of domain architecture, HD spans 499 to 622 (VDEHLIRCIG…VQSVEQMKLL (124 aa)). ACT domains follow at residues 740-822 (ELTI…AVAR) and 851-931 (VIEV…QPAA).

Belongs to the GlnD family. It depends on Mg(2+) as a cofactor.

It carries out the reaction [protein-PII]-L-tyrosine + UTP = [protein-PII]-uridylyl-L-tyrosine + diphosphate. It catalyses the reaction [protein-PII]-uridylyl-L-tyrosine + H2O = [protein-PII]-L-tyrosine + UMP + H(+). Uridylyltransferase (UTase) activity is inhibited by glutamine, while glutamine activates uridylyl-removing (UR) activity. Modifies, by uridylylation and deuridylylation, the PII regulatory proteins (GlnB and homologs), in response to the nitrogen status of the cell that GlnD senses through the glutamine level. Under low glutamine levels, catalyzes the conversion of the PII proteins and UTP to PII-UMP and PPi, while under higher glutamine levels, GlnD hydrolyzes PII-UMP to PII and UMP (deuridylylation). Thus, controls uridylylation state and activity of the PII proteins, and plays an important role in the regulation of nitrogen fixation and metabolism. This Bradyrhizobium sp. (strain BTAi1 / ATCC BAA-1182) protein is Bifunctional uridylyltransferase/uridylyl-removing enzyme.